Reading from the N-terminus, the 431-residue chain is MAEPFSTILGTDGSGGRCKYLNKGIVGLGSYGEAYVAESVEDGSLCVAKVMDLSKMSQRDKRYAQSEIKCLANCNHPNIIRYIEDHEENDRLLIVMEFADSGNLDEQIKLRGSGDARYFQEHEALFLFLQLCLALDYIHSHKMLHRDIKSANVLLTSTGLVKLGDFGFSHQYEDTVSGVVASTFCGTPYYLAPELWNNKRYNKKADVWSLGVLLYEIMGMKKPFSASNLKGLMSKVLAGTYAPLPDSFSSEFKRVVDGILVADPNDRPSVREIFQIPYINKGLKLFVQALKKNERISDSVKEVLVTQVSEILSSEVSPDAHRFLVSQINYDVTHRGHVNKLGGGNGKSWKPRFLQIVRGQLILTDDEEGNNPKGLNLEQVQGACPVPHSTAKRDFVFALNTVGGKGMWFQAVSHGDMEMWVHAIQRGIGVA.

Residues 20–279 form the Protein kinase domain; it reads YLNKGIVGLG…VREIFQIPYI (260 aa). ATP-binding positions include 26 to 34 and K49; that span reads VGLGSYGEA. D147 acts as the Proton acceptor in catalysis. One can recognise a PH domain in the interval 331–429; it reads DVTHRGHVNK…WVHAIQRGIG (99 aa).

It belongs to the protein kinase superfamily. Ser/Thr protein kinase family.

It catalyses the reaction L-seryl-[protein] + ATP = O-phospho-L-seryl-[protein] + ADP + H(+). The catalysed reaction is L-threonyl-[protein] + ATP = O-phospho-L-threonyl-[protein] + ADP + H(+). The protein is Putative serine/threonine-protein kinase A (NRKA) of Trypanosoma brucei brucei.